The chain runs to 2586 residues: Highly reducing polyketide synthase FUM1 (2586 aa).

Positions 29–451 constitute a Ketosynthase family 3 (KS3) domain; the sequence is VLPVAIVGMG…GANAHCIIET (423 aa). Residues C201, H336, and H374 each act as for beta-ketoacyl synthase activity in the active site. A malonyl-CoA:ACP transacylase (MAT) domain region spans residues 609–928; that stretch reads IFTGQGAQWV…TESLLKLAGE (320 aa). The segment at 980-1111 is N-terminal hotdog fold; that stretch reads HELLGSRTLE…GQVRPGQDAH (132 aa). The interval 980-1269 is dehydratase (DH) domain; sequence HELLGSRTLE…LEDGKFSPLE (290 aa). One can recognise a PKS/mFAS DH domain in the interval 980 to 1274; sequence HELLGSRTLE…FSPLEMDLAE (295 aa). H1012 acts as the Proton acceptor; for dehydratase activity in catalysis. Residues 1125–1274 are C-terminal hotdog fold; it reads QHYPRLVDNL…FSPLEMDLAE (150 aa). D1186 serves as the catalytic Proton donor; for dehydratase activity. A methyltransferase (CMet) domain region spans residues 1450–1627; it reads DFFATAGHTR…GFSGVDSAIY (178 aa). The segment at 1862 to 2172 is enoyl reductase (ER) (ER) domain; sequence GLLQTLGWVP…KGVHLGKIVV (311 aa). The tract at residues 2197 to 2373 is ketoreductase (KR) domain; sequence ASYLLVGGLG…ASVLQIGLIE (177 aa). The Carrier domain occupies 2486 to 2565; sequence PATVELVTNE…GLARLTVDGL (80 aa). S2524 carries the post-translational modification O-(pantetheine 4'-phosphoryl)serine.

It participates in mycotoxin biosynthesis. Its function is as follows. Highly reducing polyketide synthase; part of the gene cluster that mediates the biosynthesis of fumonisins B1 (FB1), B2 (FB2), B3 (FB3), and B4 (FB4), which are carcinogenic mycotoxins. The biosynthesis starts with the FUM1-catalyzed carbon chain assembly from one molecule of acetyl-CoA, eight molecules of malonyl-CoA, and two molecules of methionine (in S-adenosyl form). The C18 polyketide chain is released from the enzyme by a nucleophilic attack of a carbanion, which is derived from R-carbon of alanine by decarboxylation, on the carbonyl carbon of polyketide acyl chain. This step is catalyzed by the pyridoxal 5'-phosphate-dependent aminoacyl transferase FUM8. The resultant 3-keto intermediate is then stereospecifically reduced to a 3-hydroxyl product by reductase FUM13. Subsequent oxidations at C-10 by the cytochrome P450 monooxygenase FUM2, C-14 and C-15 by FUM6, FUM12 or FUM15, tricarballylic esterification of the hydroxyl groups on C-14 and C-15 by acyltransferase FUM14, and C-5 hydroxylation by 2-keto-glutarate-dependent dioxygenase FUM3 furnish the biosynthesis of fumonisins. The tricarballylic moieties are most likely derived from the citric acid cycle, and their addition to the carbon backbone may involve FUM7, FUM10, FUM11 and FUM14. The polypeptide is Highly reducing polyketide synthase FUM1 (Gibberella moniliformis (strain M3125 / FGSC 7600) (Maize ear and stalk rot fungus)).